Reading from the N-terminus, the 402-residue chain is Acetate kinase (402 aa).

Position 10 (Asn-10) interacts with Mg(2+). Lys-17 lines the ATP pocket. A substrate-binding site is contributed by Arg-89. Asp-148 (proton donor/acceptor) is an active-site residue. Residues 208-212 (HLGNG), 283-285 (DCR), and 334-338 (GIGEN) contribute to the ATP site. Glu-389 contacts Mg(2+).

The protein belongs to the acetokinase family. As to quaternary structure, homodimer. The cofactor is Mg(2+). Mn(2+) is required as a cofactor.

It is found in the cytoplasm. The catalysed reaction is acetate + ATP = acetyl phosphate + ADP. Its pathway is metabolic intermediate biosynthesis; acetyl-CoA biosynthesis; acetyl-CoA from acetate: step 1/2. In terms of biological role, catalyzes the formation of acetyl phosphate from acetate and ATP. Can also catalyze the reverse reaction. In Actinobacillus pleuropneumoniae serotype 7 (strain AP76), this protein is Acetate kinase.